Reading from the N-terminus, the 183-residue chain is Outer membrane protein H.8 (183 aa).

Positions 1–17 (MKAYLALISAAVIGLAA) are cleaved as a signal peptide. C18 carries the N-palmitoyl cysteine lipid modification. Residue C18 is the site of S-diacylglycerol cysteine attachment. Residues 27 to 51 (AEATPAAEAPASEAPAAEAAPADAA) are disordered. A Plastocyanin-like domain is found at 57-183 (GNCAATVESN…LMNGKVTLVD (127 aa)). Positions 102, 166, 171, and 175 each coordinate Cu cation.

Cu cation serves as cofactor.

The protein localises to the cell outer membrane. This Neisseria meningitidis serogroup C / serotype 2a (strain ATCC 700532 / DSM 15464 / FAM18) protein is Outer membrane protein H.8.